Here is a 277-residue protein sequence, read N- to C-terminus: 5'-nucleotidase SurE (277 aa).

Aspartate 16, aspartate 17, serine 48, and asparagine 101 together coordinate a divalent metal cation.

This sequence belongs to the SurE nucleotidase family. A divalent metal cation is required as a cofactor.

Its subcellular location is the cytoplasm. The catalysed reaction is a ribonucleoside 5'-phosphate + H2O = a ribonucleoside + phosphate. Its function is as follows. Nucleotidase that shows phosphatase activity on nucleoside 5'-monophosphates. The sequence is that of 5'-nucleotidase SurE from Parvibaculum lavamentivorans (strain DS-1 / DSM 13023 / NCIMB 13966).